The primary structure comprises 848 residues: Coiled-coil domain-containing protein 110 (848 aa).

The disordered stretch occupies residues 41–62 (SEGVKESGGNEPEYGCASEPEN). Residues 442–794 (LQNYLKESLQ…LSDKVSSQNN (353 aa)) are a coiled coil. Ser-620 is subject to Phosphoserine.

The protein resides in the nucleus. The chain is Coiled-coil domain-containing protein 110 (Ccdc110) from Mus musculus (Mouse).